Reading from the N-terminus, the 616-residue chain is 2-isopropylmalate synthase (616 aa).

The tract at residues M1–S34 is disordered. A Pyruvate carboxyltransferase domain is found at P67–R341. Residues D76, H280, H282, and N316 each contribute to the Mg(2+) site. The interval R490–V616 is regulatory domain.

This sequence belongs to the alpha-IPM synthase/homocitrate synthase family. LeuA type 2 subfamily. In terms of assembly, homodimer. The cofactor is Mg(2+).

The protein localises to the cytoplasm. It carries out the reaction 3-methyl-2-oxobutanoate + acetyl-CoA + H2O = (2S)-2-isopropylmalate + CoA + H(+). The protein operates within amino-acid biosynthesis; L-leucine biosynthesis; L-leucine from 3-methyl-2-oxobutanoate: step 1/4. Catalyzes the condensation of the acetyl group of acetyl-CoA with 3-methyl-2-oxobutanoate (2-ketoisovalerate) to form 3-carboxy-3-hydroxy-4-methylpentanoate (2-isopropylmalate). This Corynebacterium glutamicum (strain R) protein is 2-isopropylmalate synthase.